The following is a 290-amino-acid chain: Tubulin beta-4B chain (290 aa).

The short motif at 1–4 is the MREI motif element; the sequence is MREI. A GTP-binding site is contributed by Q11. Residue T55 is modified to Phosphothreonine. An N6-acetyllysine modification is found at K58. GTP contacts are provided by E69, S138, G142, T143, G144, and N172. E69 is a binding site for Mg(2+).

Belongs to the tubulin family. In terms of assembly, dimer of alpha and beta chains. A typical microtubule is a hollow water-filled tube with an outer diameter of 25 nm and an inner diameter of 15 nM. Alpha-beta heterodimers associate head-to-tail to form protofilaments running lengthwise along the microtubule wall with the beta-tubulin subunit facing the microtubule plus end conferring a structural polarity. Microtubules usually have 13 protofilaments but different protofilament numbers can be found in some organisms and specialized cells. Component of sperm flagellar doublet microtubules. The cofactor is Mg(2+). Some glutamate residues at the C-terminus are polyglycylated, resulting in polyglycine chains on the gamma-carboxyl group. Glycylation is mainly limited to tubulin incorporated into axonemes (cilia and flagella) whereas glutamylation is prevalent in neuronal cells, centrioles, axonemes, and the mitotic spindle. Both modifications can coexist on the same protein on adjacent residues, and lowering polyglycylation levels increases polyglutamylation, and reciprocally. Cilia and flagella glycylation is required for their stability and maintenance. Flagella glycylation controls sperm motility. In terms of processing, some glutamate residues at the C-terminus are polyglutamylated, resulting in polyglutamate chains on the gamma-carboxyl group. Polyglutamylation plays a key role in microtubule severing by spastin (SPAST). SPAST preferentially recognizes and acts on microtubules decorated with short polyglutamate tails: severing activity by SPAST increases as the number of glutamates per tubulin rises from one to eight, but decreases beyond this glutamylation threshold. Glutamylation is also involved in cilia motility.

It is found in the cytoplasm. The protein resides in the cytoskeleton. Its subcellular location is the flagellum axoneme. Its function is as follows. Tubulin is the major constituent of microtubules, a cylinder consisting of laterally associated linear protofilaments composed of alpha- and beta-tubulin heterodimers. Microtubules grow by the addition of GTP-tubulin dimers to the microtubule end, where a stabilizing cap forms. Below the cap, tubulin dimers are in GDP-bound state, owing to GTPase activity of alpha-tubulin. The protein is Tubulin beta-4B chain (TUBB4B) of Mesocricetus auratus (Golden hamster).